A 590-amino-acid chain; its full sequence is Ankyrin repeat-containing protein ITN1 (590 aa).

Residues 25 to 44 are disordered; it reads ENQNPMIDPSPTPSPSATAT. 7 ANK repeats span residues 73-102, 128-157, 163-192, 197-226, 231-260, 265-294, and 299-329; these read HNDTELHLAAQRGDLAAVQQILKDINSQME, LGETALFTAADKGHLDVVKELLKYSSRESI, SGYDPLHIAAIQGHHAIVEVLLDHDATLSQ, SNATPLVSAAMRGHTEVVNQLLSKAGNLLE, NNKNALHLAARQGHVEVIKALLSKDPQLAR, KGQTALHMAVKGQSSEVVKLLLDADPAIVM, and SCNTALHVATRKKRAEIVELLLSLPDTNANT. The next 4 membrane-spanning stretches (helical) occupy residues 422-442, 460-480, 500-520, and 531-551; these read VTVVAVLFATVAFAAIFTVPG, IFFIFNALALFTSLAVVVVQI, LMWLASMCTSVAFLASSYIVV, and VTVVGGVIMAGVLGTMTYYVV.

In terms of assembly, interacts with REM19/RTV1. Expressed in roots, shoots, leaf vasculature and stems.

The protein localises to the cell membrane. Involved in salt stress tolerance. May act through abscisic acid (ABA) signaling pathways and promote reactive oxygen species (ROS) production. This Arabidopsis thaliana (Mouse-ear cress) protein is Ankyrin repeat-containing protein ITN1.